The primary structure comprises 377 residues: Phospho-N-acetylmuramoyl-pentapeptide-transferase (377 aa).

A run of 10 helical transmembrane segments spans residues 2–22 (IQLL…TPAL), 55–75 (VAIL…SVLA), 82–102 (ITLS…VGFL), 122–142 (MVLQ…FPDA), 162–182 (LAFA…NLIA), 195–215 (LDGL…LITL), 236–256 (PMDL…FLWW), 263–283 (IFMG…FAVL), 288–308 (LLLV…ILQV), and 343–363 (FWVI…GDWL).

Belongs to the glycosyltransferase 4 family. MraY subfamily. The cofactor is Mg(2+).

The protein localises to the cell membrane. The catalysed reaction is UDP-N-acetyl-alpha-D-muramoyl-L-alanyl-gamma-D-glutamyl-meso-2,6-diaminopimeloyl-D-alanyl-D-alanine + di-trans,octa-cis-undecaprenyl phosphate = di-trans,octa-cis-undecaprenyl diphospho-N-acetyl-alpha-D-muramoyl-L-alanyl-D-glutamyl-meso-2,6-diaminopimeloyl-D-alanyl-D-alanine + UMP. It functions in the pathway cell wall biogenesis; peptidoglycan biosynthesis. Functionally, catalyzes the initial step of the lipid cycle reactions in the biosynthesis of the cell wall peptidoglycan: transfers peptidoglycan precursor phospho-MurNAc-pentapeptide from UDP-MurNAc-pentapeptide onto the lipid carrier undecaprenyl phosphate, yielding undecaprenyl-pyrophosphoryl-MurNAc-pentapeptide, known as lipid I. In Kocuria rhizophila (strain ATCC 9341 / DSM 348 / NBRC 103217 / DC2201), this protein is Phospho-N-acetylmuramoyl-pentapeptide-transferase.